The chain runs to 70 residues: NAD(P)H-quinone oxidoreductase subunit O (70 aa).

This sequence belongs to the complex I NdhO subunit family. As to quaternary structure, NDH-1 can be composed of about 15 different subunits; different subcomplexes with different compositions have been identified which probably have different functions.

Its subcellular location is the cellular thylakoid membrane. The catalysed reaction is a plastoquinone + NADH + (n+1) H(+)(in) = a plastoquinol + NAD(+) + n H(+)(out). The enzyme catalyses a plastoquinone + NADPH + (n+1) H(+)(in) = a plastoquinol + NADP(+) + n H(+)(out). NDH-1 shuttles electrons from an unknown electron donor, via FMN and iron-sulfur (Fe-S) centers, to quinones in the respiratory and/or the photosynthetic chain. The immediate electron acceptor for the enzyme in this species is believed to be plastoquinone. Couples the redox reaction to proton translocation, and thus conserves the redox energy in a proton gradient. Cyanobacterial NDH-1 also plays a role in inorganic carbon-concentration. The sequence is that of NAD(P)H-quinone oxidoreductase subunit O from Trichormus variabilis (strain ATCC 29413 / PCC 7937) (Anabaena variabilis).